Consider the following 212-residue polypeptide: COP9 signalosome complex subunit 8 (212 aa).

In terms of domain architecture, PCI spans 26–193 (TSLSAYEEQA…KPVVTAPPKD (168 aa)).

Belongs to the CSN8 family. As to quaternary structure, component of the COP9 signalosome (CSN) complex.

The protein localises to the cytoplasm. Its subcellular location is the nucleus. Component of the COP9 signalosome (CSN) complex that acts as an regulator of the ubiquitin (Ubl) conjugation pathway by mediating the deneddylation of the cullin subunit of SCF-type E3 ubiquitin-protein ligase complexes. The CSN complex seems to link protein degradation to sexual development. The sequence is that of COP9 signalosome complex subunit 8 (csnH) from Emericella nidulans (strain FGSC A4 / ATCC 38163 / CBS 112.46 / NRRL 194 / M139) (Aspergillus nidulans).